The following is a 239-amino-acid chain: Hydroxyacylglutathione hydrolase (239 aa).

7 residues coordinate Zn(2+): histidine 54, histidine 56, aspartate 58, histidine 59, histidine 112, aspartate 131, and histidine 169.

Belongs to the metallo-beta-lactamase superfamily. Glyoxalase II family. In terms of assembly, monomer. Requires Zn(2+) as cofactor.

The catalysed reaction is an S-(2-hydroxyacyl)glutathione + H2O = a 2-hydroxy carboxylate + glutathione + H(+). It functions in the pathway secondary metabolite metabolism; methylglyoxal degradation; (R)-lactate from methylglyoxal: step 2/2. Its function is as follows. Thiolesterase that catalyzes the hydrolysis of S-D-lactoyl-glutathione to form glutathione and D-lactic acid. The sequence is that of Hydroxyacylglutathione hydrolase from Pelagibacter ubique (strain HTCC1062).